Here is a 552-residue protein sequence, read N- to C-terminus: Steroid transmembrane transporter SLC22A24 (552 aa).

A run of 12 helical transmembrane segments spans residues 16–36, 146–166, 174–194, 204–224, 235–255, 260–280, 349–369, 380–400, 407–427, 436–456, 473–493, and 495–515; these read FQIL…PHIL, SVVQ…FGYL, MICS…AFAP, FLAG…VIEW, TLLL…AFVI, TLQL…RWLV, IVLY…GLIF, LFQV…LLVM, ISQV…TFLD, ILAT…SVHF, ILFS…VGFS, and YLPW…VLLL.

Belongs to the major facilitator (TC 2.A.1) superfamily. Organic cation transporter (TC 2.A.1.19) family.

Its subcellular location is the cell membrane. The catalysed reaction is estrone 3-sulfate(out) + glutarate(in) = estrone 3-sulfate(in) + glutarate(out). It catalyses the reaction 17beta-estradiol 17-O-(beta-D-glucuronate)(out) + glutarate(in) = 17beta-estradiol 17-O-(beta-D-glucuronate)(in) + glutarate(out). The enzyme catalyses 5alpha-androstane-3alpha,17beta-diol 3-O-(beta-D-glucuronate)(out) + glutarate(in) = 5alpha-androstane-3alpha,17beta-diol 3-O-(beta-D-glucuronate)(in) + glutarate(out). It carries out the reaction dehydroepiandrosterone 3-sulfate(out) + glutarate(in) = dehydroepiandrosterone 3-sulfate(in) + glutarate(out). The catalysed reaction is glutarate(in) + succinate(out) = glutarate(out) + succinate(in). Renal transmembrane organic anion/dicarboxylate exchanger that participates in the reabsorption of conjugated steroids, as well as bile acids, driven by an outward gradient of dicarboxylates such as glutarate or succinate. Transports androstanediol glucuronide (5alpha-androstane-3alpha,17beta-diol 3-O-(beta-D-glucuronate)), estrone 3-sulfate, and estradiol-17-glucuronide (17beta-estradiol 17-O-(beta-D-glucuronate)), but not taurocholate. The sequence is that of Steroid transmembrane transporter SLC22A24 from Microcebus murinus (Gray mouse lemur).